A 363-amino-acid polypeptide reads, in one-letter code: Class I histocompatibility antigen, Gogo-B*0201 alpha chain (363 aa).

The signal sequence occupies residues Met1–Ala24. An alpha-1 region spans residues Gly25–Asp114. Topologically, residues Gly25–Ile308 are extracellular. An N-linked (GlcNAc...) asparagine glycan is attached at Asn110. Residues Gly115–Ala206 are alpha-2. Intrachain disulfides connect Cys125–Cys188 and Cys227–Cys283. An alpha-3 region spans residues Asp207–Trp298. An Ig-like C1-type domain is found at Pro209–Arg297. The interval Glu299–Ile308 is connecting peptide. Residues Val309–Cys333 traverse the membrane as a helical segment. Over Arg334–Ala363 the chain is Cytoplasmic. A disordered region spans residues Lys336–Ala363. The segment covering Ser344–Ala363 has biased composition (low complexity).

Belongs to the MHC class I family. In terms of assembly, heterodimer of an alpha chain and a beta chain (beta-2-microglobulin).

The protein resides in the membrane. Functionally, involved in the presentation of foreign antigens to the immune system. In Gorilla gorilla gorilla (Western lowland gorilla), this protein is Class I histocompatibility antigen, Gogo-B*0201 alpha chain.